The following is a 432-amino-acid chain: Adenylosuccinate synthetase (432 aa).

Residues 13–19 (GDEGKGK) and 41–43 (GHT) each bind GTP. Catalysis depends on D14, which acts as the Proton acceptor. Mg(2+) is bound by residues D14 and G41. Residues 14–17 (DEGK), 39–42 (NAGH), T130, R144, Q225, T240, and R304 contribute to the IMP site. The active-site Proton donor is H42. 300–306 (ATTGRRR) provides a ligand contact to substrate. GTP contacts are provided by residues R306, 332–334 (KLD), and 415–417 (STG).

The protein belongs to the adenylosuccinate synthetase family. Homodimer. Mg(2+) serves as cofactor.

It is found in the cytoplasm. It catalyses the reaction IMP + L-aspartate + GTP = N(6)-(1,2-dicarboxyethyl)-AMP + GDP + phosphate + 2 H(+). Its pathway is purine metabolism; AMP biosynthesis via de novo pathway; AMP from IMP: step 1/2. Functionally, plays an important role in the de novo pathway of purine nucleotide biosynthesis. Catalyzes the first committed step in the biosynthesis of AMP from IMP. This chain is Adenylosuccinate synthetase, found in Salmonella choleraesuis (strain SC-B67).